A 40-amino-acid polypeptide reads, in one-letter code: MKVRNSLRALKKIPGAQIVRRRGRTFVINKKNPRMKARQG.

This sequence belongs to the bacterial ribosomal protein bL36 family.

This is Large ribosomal subunit protein bL36B from Arthrobacter sp. (strain FB24).